A 224-amino-acid polypeptide reads, in one-letter code: Octanoyltransferase (224 aa).

The BPL/LPL catalytic domain maps to 45 to 223; sequence PSNKQAVWML…SLNKRFGLLW (179 aa). Substrate-binding positions include 87-94, 154-156, and 167-169; these read RGGDVTHH, SIG, and GIA. C185 serves as the catalytic Acyl-thioester intermediate.

This sequence belongs to the LipB family.

The protein localises to the cytoplasm. The enzyme catalyses octanoyl-[ACP] + L-lysyl-[protein] = N(6)-octanoyl-L-lysyl-[protein] + holo-[ACP] + H(+). The protein operates within protein modification; protein lipoylation via endogenous pathway; protein N(6)-(lipoyl)lysine from octanoyl-[acyl-carrier-protein]: step 1/2. Functionally, catalyzes the transfer of endogenously produced octanoic acid from octanoyl-acyl-carrier-protein onto the lipoyl domains of lipoate-dependent enzymes. Lipoyl-ACP can also act as a substrate although octanoyl-ACP is likely to be the physiological substrate. The sequence is that of Octanoyltransferase from Prochlorococcus marinus (strain SARG / CCMP1375 / SS120).